Reading from the N-terminus, the 291-residue chain is 4-hydroxy-tetrahydrodipicolinate synthase (291 aa).

Thr-45 is a pyruvate binding site. Catalysis depends on Tyr-133, which acts as the Proton donor/acceptor. Catalysis depends on Lys-161, which acts as the Schiff-base intermediate with substrate. Ile-203 contributes to the pyruvate binding site.

This sequence belongs to the DapA family. Homotetramer; dimer of dimers.

The protein resides in the cytoplasm. It carries out the reaction L-aspartate 4-semialdehyde + pyruvate = (2S,4S)-4-hydroxy-2,3,4,5-tetrahydrodipicolinate + H2O + H(+). It participates in amino-acid biosynthesis; L-lysine biosynthesis via DAP pathway; (S)-tetrahydrodipicolinate from L-aspartate: step 3/4. In terms of biological role, catalyzes the condensation of (S)-aspartate-beta-semialdehyde [(S)-ASA] and pyruvate to 4-hydroxy-tetrahydrodipicolinate (HTPA). This is 4-hydroxy-tetrahydrodipicolinate synthase from Neisseria gonorrhoeae (strain ATCC 700825 / FA 1090).